The chain runs to 310 residues: Putative integrase/recombinase y4rE (310 aa).

Positions Arg6 to Ala83 constitute a Core-binding (CB) domain. The region spanning Pro104–Glu301 is the Tyr recombinase domain. Catalysis depends on residues Arg148, Lys173, His245, Arg248, and His279. Tyr288 acts as the O-(3'-phospho-DNA)-tyrosine intermediate in catalysis.

It belongs to the 'phage' integrase family.

The protein is Putative integrase/recombinase y4rE of Sinorhizobium fredii (strain NBRC 101917 / NGR234).